Here is a 273-residue protein sequence, read N- to C-terminus: Ribonuclease Z (273 aa).

Zn(2+) is bound by residues His61, His63, His146, Asp169, and His233.

This sequence belongs to the RNase Z family. In terms of assembly, homodimer. Requires Zn(2+) as cofactor.

It carries out the reaction Endonucleolytic cleavage of RNA, removing extra 3' nucleotides from tRNA precursor, generating 3' termini of tRNAs. A 3'-hydroxy group is left at the tRNA terminus and a 5'-phosphoryl group is left at the trailer molecule.. Its function is as follows. Zinc phosphodiesterase, which displays some tRNA 3'-processing endonuclease activity. Probably involved in tRNA maturation, by removing a 3'-trailer from precursor tRNA. The protein is Ribonuclease Z of Mycobacterium tuberculosis (strain ATCC 25177 / H37Ra).